We begin with the raw amino-acid sequence, 254 residues long: Pyridoxine 5'-phosphate synthase (254 aa).

3-amino-2-oxopropyl phosphate is bound at residue N12. Residue 14-15 (DH) participates in 1-deoxy-D-xylulose 5-phosphate binding. R23 contacts 3-amino-2-oxopropyl phosphate. H48 acts as the Proton acceptor in catalysis. Residues R50 and H55 each contribute to the 1-deoxy-D-xylulose 5-phosphate site. E75 (proton acceptor) is an active-site residue. Residue T105 coordinates 1-deoxy-D-xylulose 5-phosphate. Residue H199 is the Proton donor of the active site. 3-amino-2-oxopropyl phosphate is bound by residues G200 and 221–222 (GF).

Belongs to the PNP synthase family. Homooctamer; tetramer of dimers.

It localises to the cytoplasm. It carries out the reaction 3-amino-2-oxopropyl phosphate + 1-deoxy-D-xylulose 5-phosphate = pyridoxine 5'-phosphate + phosphate + 2 H2O + H(+). It functions in the pathway cofactor biosynthesis; pyridoxine 5'-phosphate biosynthesis; pyridoxine 5'-phosphate from D-erythrose 4-phosphate: step 5/5. Functionally, catalyzes the complicated ring closure reaction between the two acyclic compounds 1-deoxy-D-xylulose-5-phosphate (DXP) and 3-amino-2-oxopropyl phosphate (1-amino-acetone-3-phosphate or AAP) to form pyridoxine 5'-phosphate (PNP) and inorganic phosphate. This is Pyridoxine 5'-phosphate synthase from Rhodopseudomonas palustris (strain TIE-1).